The following is a 287-amino-acid chain: MKKKKRFKQKLLIASLVIGLMAVLSGCGYSTDPITSESTGFWSHYIVFPLSWTITWFSDLFGGSYAVGIIVVTILIRLLIMPLMIKQLKSQKAMTNLQPKIKELQEKYSSKDNETKQKLQQETMRLYQENSVNPMMGCLPLLIQMPILLGFYQAISRTAEIKTDSFLWMQLGNPDPYYILPVVAALTTFLSSKISMMGQTQQNKSMAMIVYIMPVMILFMGITLPSALALYWIIGNIFTVFQTLLINNPFKNKREQEALAAAQVAEDRLKKKAANMKASKKGGKKRK.

The first 26 residues, 1–26 (MKKKKRFKQKLLIASLVIGLMAVLSG), serve as a signal peptide directing secretion. Cys-27 carries the N-palmitoyl cysteine lipid modification. Residue Cys-27 is the site of S-diacylglycerol cysteine attachment. Helical transmembrane passes span 65 to 85 (YAVG…PLMI), 135 to 155 (MMGC…YQAI), 178 to 198 (YILP…SMMG), 207 to 224 (AMIV…GITL), and 228 to 250 (LALY…NNPF).

Belongs to the OXA1/ALB3/YidC family. Type 2 subfamily.

It localises to the cell membrane. In terms of biological role, required for the insertion and/or proper folding and/or complex formation of integral membrane proteins into the membrane. Involved in integration of membrane proteins that insert both dependently and independently of the Sec translocase complex, as well as at least some lipoproteins. In Listeria monocytogenes serovar 1/2a (strain ATCC BAA-679 / EGD-e), this protein is Membrane protein insertase YidC 2.